Consider the following 214-residue polypeptide: Ribosomal RNA small subunit methyltransferase G (214 aa).

Residues glycine 81, methionine 86, alanine 132–glutamate 133, and arginine 147 contribute to the S-adenosyl-L-methionine site.

This sequence belongs to the methyltransferase superfamily. RNA methyltransferase RsmG family.

The protein localises to the cytoplasm. The enzyme catalyses guanosine(527) in 16S rRNA + S-adenosyl-L-methionine = N(7)-methylguanosine(527) in 16S rRNA + S-adenosyl-L-homocysteine. In terms of biological role, specifically methylates the N7 position of guanine in position 527 of 16S rRNA. The chain is Ribosomal RNA small subunit methyltransferase G from Pseudomonas syringae pv. syringae (strain B728a).